Here is a 190-residue protein sequence, read N- to C-terminus: uncharacterized protein (190 aa).

It to Synechocystis PCC 6803 sll1609 and slr1290.

This is an uncharacterized protein from Synechocystis sp. (strain ATCC 27184 / PCC 6803 / Kazusa).